The following is a 1347-amino-acid chain: Spermatogenesis-associated protein 31A7 (1347 aa).

A helical membrane pass occupies residues 23–43 (PWVLDIFLTLVFALGFFFLLL). 7 disordered regions span residues 55 to 88 (PSPSPGKRKCPVGRRRRPRGRMKNHSLRAGRECP), 106 to 233 (GPHL…RDST), 374 to 397 (QDTTNPKPFWNMGENSKQLPGPQK), 628 to 658 (DESPGTSQAKGKPSPWQSSMSTGESSKEAQK), 900 to 955 (RGIP…REAV), 1084 to 1161 (VHEE…PSVS), and 1313 to 1335 (KAVSPVSPPQHWPKTSGASSHHH). The span at 60–82 (GKRKCPVGRRRRPRGRMKNHSLR) shows a compositional bias: basic residues. Polar residues predominate over residues 165 to 178 (LASTPSPGPMTTSV). Over residues 198 to 211 (PEPPALFPHPPHTP) the composition is skewed to pro residues. 2 stretches are compositionally biased toward polar residues: residues 631 to 651 (PGTSQAKGKPSPWQSSMSTGE) and 927 to 948 (LTYSLTGSIQQSRSLGAQSSKA). 2 stretches are compositionally biased toward basic and acidic residues: residues 1108–1127 (HKSEKSRKPNLEKHEERLEG) and 1137–1146 (RKTEDTHQDE).

Belongs to the SPATA31 family.

The protein localises to the membrane. Its function is as follows. May play a role in spermatogenesis. The protein is Spermatogenesis-associated protein 31A7 of Homo sapiens (Human).